Consider the following 175-residue polypeptide: Large ribosomal subunit protein uL10 (175 aa).

It belongs to the universal ribosomal protein uL10 family. Part of the ribosomal stalk of the 50S ribosomal subunit. The N-terminus interacts with L11 and the large rRNA to form the base of the stalk. The C-terminus forms an elongated spine to which L12 dimers bind in a sequential fashion forming a multimeric L10(L12)X complex.

In terms of biological role, forms part of the ribosomal stalk, playing a central role in the interaction of the ribosome with GTP-bound translation factors. This chain is Large ribosomal subunit protein uL10, found in Prochlorococcus marinus (strain MIT 9211).